We begin with the raw amino-acid sequence, 271 residues long: Phospholipid scramblase family member 5 (271 aa).

Polar residues predominate over residues 1-10; that stretch reads MASKDAQNQR. Positions 1-33 are disordered; that stretch reads MASKDAQNQRRGLPGFLPGAPDPDQSLPASSNP. Positions 1–45 are proline-rich domain (PRD); sequence MASKDAQNQRRGLPGFLPGAPDPDQSLPASSNPGNQAWQLSLPLP.

It belongs to the phospholipid scramblase family.

This is Phospholipid scramblase family member 5 (PLSCR5) from Homo sapiens (Human).